The sequence spans 354 residues: Methylthioribose-1-phosphate isomerase (354 aa).

Residues 58 to 60 (RGA), Arg-101, and Gln-204 contribute to the substrate site. Catalysis depends on Asp-245, which acts as the Proton donor. 255–256 (NK) provides a ligand contact to substrate.

It belongs to the eIF-2B alpha/beta/delta subunits family. MtnA subfamily.

The enzyme catalyses 5-(methylsulfanyl)-alpha-D-ribose 1-phosphate = 5-(methylsulfanyl)-D-ribulose 1-phosphate. The protein operates within amino-acid biosynthesis; L-methionine biosynthesis via salvage pathway; L-methionine from S-methyl-5-thio-alpha-D-ribose 1-phosphate: step 1/6. Catalyzes the interconversion of methylthioribose-1-phosphate (MTR-1-P) into methylthioribulose-1-phosphate (MTRu-1-P). The protein is Methylthioribose-1-phosphate isomerase of Stenotrophomonas maltophilia (strain R551-3).